The chain runs to 274 residues: Glutamate--cysteine ligase regulatory subunit (274 aa).

Ser-59 is subject to Phosphoserine. The residue at position 263 (Lys-263) is an N6-acetyllysine.

This sequence belongs to the aldo/keto reductase family. Glutamate--cysteine ligase light chain subfamily. Heterodimer of a catalytic heavy chain and a regulatory light chain. As to expression, most abundant in kidney. Also found in liver and testis.

It functions in the pathway sulfur metabolism; glutathione biosynthesis; glutathione from L-cysteine and L-glutamate: step 1/2. This chain is Glutamate--cysteine ligase regulatory subunit (Gclm), found in Rattus norvegicus (Rat).